The chain runs to 487 residues: Betaine aldehyde dehydrogenase (487 aa).

Positions 27 and 93 each coordinate K(+). 149 to 151 (GAW) contributes to the NAD(+) binding site. Lysine 161 (charge relay system) is an active-site residue. NAD(+)-binding positions include 175–178 (KPSE) and 228–231 (SVPT). A K(+)-binding site is contributed by leucine 243. The Proton acceptor role is filled by glutamate 249. Glycine 251, cysteine 283, and glutamate 384 together coordinate NAD(+). The active-site Nucleophile is cysteine 283. Cysteine sulfenic acid (-SOH) is present on cysteine 283. Positions 454 and 457 each coordinate K(+). Glutamate 461 serves as the catalytic Charge relay system.

This sequence belongs to the aldehyde dehydrogenase family. Dimer of dimers. It depends on K(+) as a cofactor.

The enzyme catalyses betaine aldehyde + NAD(+) + H2O = glycine betaine + NADH + 2 H(+). It functions in the pathway amine and polyamine biosynthesis; betaine biosynthesis via choline pathway; betaine from betaine aldehyde: step 1/1. Functionally, involved in the biosynthesis of the osmoprotectant glycine betaine. Catalyzes the irreversible oxidation of betaine aldehyde to the corresponding acid. This Brucella suis (strain ATCC 23445 / NCTC 10510) protein is Betaine aldehyde dehydrogenase.